Reading from the N-terminus, the 36-residue chain is Photosystem I reaction center subunit VIII (36 aa).

A helical transmembrane segment spans residues 1–21 (MITFSFPSIFVPLVGLVFPAI).

This sequence belongs to the PsaI family.

It is found in the plastid. The protein localises to the chloroplast thylakoid membrane. May help in the organization of the PsaL subunit. The polypeptide is Photosystem I reaction center subunit VIII (Coffea arabica (Arabian coffee)).